Consider the following 377-residue polypeptide: DNA methyltransferase CcrM (377 aa).

The region spanning 271–373 (LGKAELTVMT…LRKIIREQMA (103 aa)) is the RAMA domain.

This sequence belongs to the N(4)/N(6)-methyltransferase family.

The enzyme catalyses a 2'-deoxyadenosine in DNA + S-adenosyl-L-methionine = an N(6)-methyl-2'-deoxyadenosine in DNA + S-adenosyl-L-homocysteine + H(+). A beta subtype methylase that recognizes the double-stranded sequence 5'-GANTC-3' and methylates on A-2 on both strands. Overexpression from a moderate-copy number plasmid (10-12 copies/cell) leads to enlarged, branched cells, many with 3-5 genome equivalents. Contributes to the accurate cell-cycle control of DNA replication and cellular morphology. The sequence is that of DNA methyltransferase CcrM from Brucella abortus (strain 2308).